A 520-amino-acid polypeptide reads, in one-letter code: Cyclin-L2 (520 aa).

2 cyclin-like regions span residues 81-183 and 196-280; these read ELIQ…RVLK and KIIV…KILQ. Residues 309-520 are disordered; that stretch reads RAKGLLPPGS…DHPGHSRHRR (212 aa). Phosphoserine occurs at positions 330, 337, 347, and 350. Over residues 356–366 the composition is skewed to basic and acidic residues; it reads RKMEGPKKAKG. Residue S368 is modified to Phosphoserine. The interval 384-422 is RS; sequence RSREQSYSRSPSRSASPKRRKSDSGSTSGGSKSQSRSRS. The segment covering 407–429 has biased composition (low complexity); that stretch reads SGSTSGGSKSQSRSRSRSDSPPR. Residues 440 to 453 are compositionally biased toward basic and acidic residues; the sequence is SEVRGSRKSKDCKH. The span at 454-471 shows a compositional bias: basic residues; that stretch reads LTQKPHKSRSRSSSRSRS. Composition is skewed to basic and acidic residues over residues 472–481 and 489–514; these read RSRERTDSSG and YYRD…DHPG.

The protein belongs to the cyclin family. Cyclin L subfamily. In terms of assembly, interacts with CDK11A, CDK11B, CDK12, CDK13 and POLR2A, the hyperphosphorylated C-terminal domain (CTD) of RNA polymerase II. May form a ternary complex with CDK11B and casein kinase II (CKII). Interacts with pre-mRNA-splicing factors, including at least SRSF1, SRSF2 and SRSF7/SLU7.

It localises to the nucleus speckle. Its subcellular location is the nucleus. The protein resides in the nucleoplasm. Functionally, involved in pre-mRNA splicing. May induce cell death, possibly by acting on the transcription and RNA processing of apoptosis-related factors. This chain is Cyclin-L2 (Ccnl2), found in Rattus norvegicus (Rat).